Consider the following 387-residue polypeptide: Phosphoglycerate kinase (387 aa).

Residues 21-23 (DLN), Arg-36, 60-63 (HLGR), Arg-114, and Arg-147 contribute to the substrate site. ATP contacts are provided by residues Lys-198, Glu-313, and 339–342 (GGDT).

This sequence belongs to the phosphoglycerate kinase family. Monomer.

The protein localises to the cytoplasm. The catalysed reaction is (2R)-3-phosphoglycerate + ATP = (2R)-3-phospho-glyceroyl phosphate + ADP. It functions in the pathway carbohydrate degradation; glycolysis; pyruvate from D-glyceraldehyde 3-phosphate: step 2/5. This is Phosphoglycerate kinase from Baumannia cicadellinicola subsp. Homalodisca coagulata.